Here is a 255-residue protein sequence, read N- to C-terminus: MRILLTNDDGIQAVGIRHLYKGLIDAGHDVLVAAPISEQSAVGHAITIASPLRVKEFVENGFRGLGVSGTPADCVKLALTTLMQDKPDLVVSGINAGANVGVDILYSGTVSAATEGALMGYPAVAVSADDFAPVDLLEQGAYVADFIAGRPWEALAPRTVLNLNFPKRPIAETLPLALCPPTQAVYNDWYVTRQDPRGRDYHWLTGVIPPEALTPDSDRALLTKGHITLTPLRFELADAAAMASLAARLGLRTDV.

Positions 8, 9, 40, and 95 each coordinate a divalent metal cation.

The protein belongs to the SurE nucleotidase family. A divalent metal cation serves as cofactor.

The protein resides in the cytoplasm. It catalyses the reaction a ribonucleoside 5'-phosphate + H2O = a ribonucleoside + phosphate. Nucleotidase that shows phosphatase activity on nucleoside 5'-monophosphates. In Solidesulfovibrio magneticus (strain ATCC 700980 / DSM 13731 / RS-1) (Desulfovibrio magneticus), this protein is 5'-nucleotidase SurE.